The sequence spans 171 residues: MANPRNEAALAELKARFAETDTVVLTEYRGLTVAQTTELRKALGFDVQYSVAKNTLVKIAANEAGIEGLDDLLTGPTAVAFIKGEAVDTAKVLKKFGEENKAFVVKGGYMDGNALTAEQVNAIAELDNRETTLAKLAGAMKGSLAKAAGLFNAPASQVARLAVALQDKKDA.

This sequence belongs to the universal ribosomal protein uL10 family. In terms of assembly, part of the ribosomal stalk of the 50S ribosomal subunit. The N-terminus interacts with L11 and the large rRNA to form the base of the stalk. The C-terminus forms an elongated spine to which L12 dimers bind in a sequential fashion forming a multimeric L10(L12)X complex.

Functionally, forms part of the ribosomal stalk, playing a central role in the interaction of the ribosome with GTP-bound translation factors. The sequence is that of Large ribosomal subunit protein uL10 from Corynebacterium glutamicum (strain R).